Reading from the N-terminus, the 460-residue chain is 3-isopropylmalate dehydratase large subunit (460 aa).

Positions 338, 398, and 401 each coordinate [4Fe-4S] cluster.

Belongs to the aconitase/IPM isomerase family. LeuC type 1 subfamily. Heterodimer of LeuC and LeuD. Requires [4Fe-4S] cluster as cofactor.

It catalyses the reaction (2R,3S)-3-isopropylmalate = (2S)-2-isopropylmalate. The protein operates within amino-acid biosynthesis; L-leucine biosynthesis; L-leucine from 3-methyl-2-oxobutanoate: step 2/4. Its function is as follows. Catalyzes the isomerization between 2-isopropylmalate and 3-isopropylmalate, via the formation of 2-isopropylmaleate. This chain is 3-isopropylmalate dehydratase large subunit, found in Streptococcus thermophilus (strain ATCC BAA-491 / LMD-9).